Reading from the N-terminus, the 154-residue chain is Interleukin-2 (154 aa).

A signal peptide spans 1 to 20; it reads MYKLQFLSCIALTLALVANS. Thr23 carries an O-linked (GalNAc...) threonine glycan. A disulfide bond links Cys78 and Cys126. A glycan (N-linked (GlcNAc...) asparagine) is linked at Asn111.

It belongs to the IL-2 family.

It is found in the secreted. Its function is as follows. Cytokine produced by activated CD4-positive helper T-cells and to a lesser extend activated CD8-positive T-cells and natural killer (NK) cells that plays pivotal roles in the immune response and tolerance. Binds to a receptor complex composed of either the high-affinity trimeric IL-2R (IL2RA/CD25, IL2RB/CD122 and IL2RG/CD132) or the low-affinity dimeric IL-2R (IL2RB and IL2RG). Interaction with the receptor leads to oligomerization and conformation changes in the IL-2R subunits resulting in downstream signaling starting with phosphorylation of JAK1 and JAK3. In turn, JAK1 and JAK3 phosphorylate the receptor to form a docking site leading to the phosphorylation of several substrates including STAT5. This process leads to activation of several pathways including STAT, phosphoinositide-3-kinase/PI3K and mitogen-activated protein kinase/MAPK pathways. Functions as a T-cell growth factor and can increase NK-cell cytolytic activity as well. Promotes strong proliferation of activated B-cells and subsequently immunoglobulin production. Plays a pivotal role in regulating the adaptive immune system by controlling the survival and proliferation of regulatory T-cells, which are required for the maintenance of immune tolerance. Moreover, participates in the differentiation and homeostasis of effector T-cell subsets, including Th1, Th2, Th17 as well as memory CD8-positive T-cells. This chain is Interleukin-2 (IL2), found in Camelus bactrianus (Bactrian camel).